Reading from the N-terminus, the 363-residue chain is Anthranilate phosphoribosyltransferase (363 aa).

5-phospho-alpha-D-ribose 1-diphosphate is bound by residues G85, 88–89, T93, 95–98, 113–121, and A125; these read GD, NVST, and KHGNRALSS. G85 is an anthranilate binding site. S97 serves as a coordination point for Mg(2+). N116 contacts anthranilate. Residue R171 participates in anthranilate binding. Mg(2+) is bound by residues D233 and E234.

This sequence belongs to the anthranilate phosphoribosyltransferase family. In terms of assembly, homodimer. The cofactor is Mg(2+).

The catalysed reaction is N-(5-phospho-beta-D-ribosyl)anthranilate + diphosphate = 5-phospho-alpha-D-ribose 1-diphosphate + anthranilate. Its pathway is amino-acid biosynthesis; L-tryptophan biosynthesis; L-tryptophan from chorismate: step 2/5. In terms of biological role, catalyzes the transfer of the phosphoribosyl group of 5-phosphorylribose-1-pyrophosphate (PRPP) to anthranilate to yield N-(5'-phosphoribosyl)-anthranilate (PRA). The chain is Anthranilate phosphoribosyltransferase from Gluconobacter oxydans (strain 621H) (Gluconobacter suboxydans).